Consider the following 604-residue polypeptide: Elongation factor 4 (604 aa).

Residues 7-190 (SRLRNFCIIA…IVDRVPAPPD (184 aa)) form the tr-type G domain. GTP is bound by residues 19–24 (DHGKST) and 136–139 (NKID).

Belongs to the TRAFAC class translation factor GTPase superfamily. Classic translation factor GTPase family. LepA subfamily.

It is found in the cell inner membrane. It carries out the reaction GTP + H2O = GDP + phosphate + H(+). In terms of biological role, required for accurate and efficient protein synthesis under certain stress conditions. May act as a fidelity factor of the translation reaction, by catalyzing a one-codon backward translocation of tRNAs on improperly translocated ribosomes. Back-translocation proceeds from a post-translocation (POST) complex to a pre-translocation (PRE) complex, thus giving elongation factor G a second chance to translocate the tRNAs correctly. Binds to ribosomes in a GTP-dependent manner. The polypeptide is Elongation factor 4 (Synechococcus sp. (strain RCC307)).